The chain runs to 66 residues: Large ribosomal subunit protein bL35 (66 aa).

Residues 18 to 27 show a composition bias toward polar residues; the sequence is ATGKIKSTQS. The segment at 18 to 41 is disordered; sequence ATGKIKSTQSAKRHGMTKRSKRSI. Basic residues predominate over residues 28 to 41; sequence AKRHGMTKRSKRSI.

It belongs to the bacterial ribosomal protein bL35 family.

The chain is Large ribosomal subunit protein bL35 from Ehrlichia ruminantium (strain Gardel).